The primary structure comprises 130 residues: MIREISNLQKDIINIQDSYSNNRVMDVGRNNRKNMSFRSSPEKSKQELRRSFSAQKRMMIPANYFSLESLFLLVGLTASLLILPLVLPPLPPPPFMLLLVPIGIMVLLVVLAFMPSSHSNANTDVTCNFM.

An organ Size Related (OSR) domain region spans residues 65-116; it reads FSLESLFLLVGLTASLLILPLVLPPLPPPPFMLLLVPIGIMVLLVVLAFMPS. 2 helical membrane passes run 70-90 and 94-114; these read LFLL…LPPL and PFML…LAFM.

Belongs to the plant organ size related (OSR) protein family. Mostly expressed in flowers, inflorescence stems, leaf primordia and young leaves, and, to a lower extent, in siliques, cotyledon vascular bundles, roots (pericycle and root tips) and mature leaves.

The protein localises to the membrane. The protein resides in the nucleus. Its subcellular location is the cytoplasm. It localises to the endoplasmic reticulum. In terms of biological role, promotes cell proliferation-dependent organ growth. Takes part in the AXR1-dependent auxin signaling pathway that requires ANT during organogenesis. This is Protein AUXIN-REGULATED GENE INVOLVED IN ORGAN SIZE (ARGOS) from Arabidopsis thaliana (Mouse-ear cress).